The primary structure comprises 100 residues: Urease subunit gamma (100 aa).

The protein belongs to the urease gamma subunit family. As to quaternary structure, heterotrimer of UreA (gamma), UreB (beta) and UreC (alpha) subunits. Three heterotrimers associate to form the active enzyme.

It is found in the cytoplasm. The catalysed reaction is urea + 2 H2O + H(+) = hydrogencarbonate + 2 NH4(+). It participates in nitrogen metabolism; urea degradation; CO(2) and NH(3) from urea (urease route): step 1/1. This chain is Urease subunit gamma, found in Photorhabdus laumondii subsp. laumondii (strain DSM 15139 / CIP 105565 / TT01) (Photorhabdus luminescens subsp. laumondii).